The sequence spans 367 residues: Ferredoxin--NADP reductase 2 (367 aa).

Residues D56, Q64, Y69, V109, F144, D309, and T350 each contribute to the FAD site.

This sequence belongs to the ferredoxin--NADP reductase type 2 family. As to quaternary structure, homodimer. FAD serves as cofactor.

It catalyses the reaction 2 reduced [2Fe-2S]-[ferredoxin] + NADP(+) + H(+) = 2 oxidized [2Fe-2S]-[ferredoxin] + NADPH. The protein is Ferredoxin--NADP reductase 2 of Cupriavidus metallidurans (strain ATCC 43123 / DSM 2839 / NBRC 102507 / CH34) (Ralstonia metallidurans).